The primary structure comprises 333 residues: Ribosomal RNA small subunit methyltransferase H (333 aa).

S-adenosyl-L-methionine-binding positions include 42 to 44 (GGH), aspartate 62, phenylalanine 86, aspartate 105, and glutamine 112.

This sequence belongs to the methyltransferase superfamily. RsmH family.

Its subcellular location is the cytoplasm. The catalysed reaction is cytidine(1402) in 16S rRNA + S-adenosyl-L-methionine = N(4)-methylcytidine(1402) in 16S rRNA + S-adenosyl-L-homocysteine + H(+). Specifically methylates the N4 position of cytidine in position 1402 (C1402) of 16S rRNA. This Cupriavidus necator (strain ATCC 17699 / DSM 428 / KCTC 22496 / NCIMB 10442 / H16 / Stanier 337) (Ralstonia eutropha) protein is Ribosomal RNA small subunit methyltransferase H.